The primary structure comprises 442 residues: 3-ketoacyl-CoA thiolase (442 aa).

Catalysis depends on Cys105, which acts as the Acyl-thioester intermediate. Active-site proton acceptor residues include His398 and Cys428.

The protein belongs to the thiolase-like superfamily. Thiolase family. In terms of assembly, heterotetramer of two alpha chains (FadJ) and two beta chains (FadI).

It is found in the cytoplasm. It catalyses the reaction an acyl-CoA + acetyl-CoA = a 3-oxoacyl-CoA + CoA. The protein operates within lipid metabolism; fatty acid beta-oxidation. In terms of biological role, catalyzes the final step of fatty acid oxidation in which acetyl-CoA is released and the CoA ester of a fatty acid two carbons shorter is formed. The polypeptide is 3-ketoacyl-CoA thiolase (Aliivibrio fischeri (strain MJ11) (Vibrio fischeri)).